A 283-amino-acid polypeptide reads, in one-letter code: D-alanine aminotransferase (283 aa).

A substrate-binding site is contributed by tyrosine 32. Pyridoxal 5'-phosphate is bound at residue arginine 51. Residues arginine 99 and histidine 101 each contribute to the substrate site. Lysine 146 acts as the Proton acceptor in catalysis. Position 146 is an N6-(pyridoxal phosphate)lysine (lysine 146). Glutamate 178 is a binding site for pyridoxal 5'-phosphate.

The protein belongs to the class-IV pyridoxal-phosphate-dependent aminotransferase family. As to quaternary structure, homodimer. It depends on pyridoxal 5'-phosphate as a cofactor.

The enzyme catalyses D-alanine + 2-oxoglutarate = D-glutamate + pyruvate. In terms of biological role, acts on the D-isomers of alanine, leucine, aspartate, glutamate, aminobutyrate, norvaline and asparagine. The enzyme transfers an amino group from a substrate D-amino acid to the pyridoxal phosphate cofactor to form pyridoxamine and an alpha-keto acid in the first half-reaction. The second-half reaction is the reverse of the first, transferring the amino group from the pyridoxamine to a second alpha-keto acid to form the product D-amino acid via a ping-pong mechanism. This is an important process in the formation of D-alanine and D-glutamate, which are essential bacterial cell wall components. The sequence is that of D-alanine aminotransferase (dat) from Bacillus sp. (strain YM-1).